A 90-amino-acid polypeptide reads, in one-letter code: Phosphocarrier protein HPr (90 aa).

Residues methionine 1–glycine 89 enclose the HPr domain. Residue histidine 15 is the Pros-phosphohistidine intermediate of the active site.

It belongs to the HPr family.

It is found in the cytoplasm. Functionally, general (non sugar-specific) component of the phosphoenolpyruvate-dependent sugar phosphotransferase system (sugar PTS). This major carbohydrate active-transport system catalyzes the phosphorylation of incoming sugar substrates concomitantly with their translocation across the cell membrane. The phosphoryl group from phosphoenolpyruvate (PEP) is transferred to the phosphoryl carrier protein HPr by enzyme I. Phospho-HPr then transfers it to the PTS EIIA domain. The chain is Phosphocarrier protein HPr (ptsH) from Pseudomonas aeruginosa (strain ATCC 15692 / DSM 22644 / CIP 104116 / JCM 14847 / LMG 12228 / 1C / PRS 101 / PAO1).